A 101-amino-acid polypeptide reads, in one-letter code: Small ribosomal subunit protein uS14 (101 aa).

The protein belongs to the universal ribosomal protein uS14 family. As to quaternary structure, part of the 30S ribosomal subunit. Contacts proteins S3 and S10.

In terms of biological role, binds 16S rRNA, required for the assembly of 30S particles and may also be responsible for determining the conformation of the 16S rRNA at the A site. This Xylella fastidiosa (strain M23) protein is Small ribosomal subunit protein uS14.